Here is a 646-residue protein sequence, read N- to C-terminus: mRNA 3'-end-processing protein RNA14 (646 aa).

6 HAT repeats span residues 46 to 78 (DDYD…SELQ), 80 to 114 (NEFD…YVRR), 128 to 160 (VVIK…FLHQ), 171 to 204 (QRLD…WEQE), 249 to 281 (ANKN…WEKE), and 290 to 322 (ALKD…YEFD). The tract at residues 571–599 (DGDPSGVDKSFKKRQIENDENLPDSKRQK) is disordered.

It is found in the nucleus. It localises to the cytoplasm. In terms of biological role, component of the cleavage factor IA (CFIA) complex, which is involved in the endonucleolytic cleavage during polyadenylation-dependent pre-mRNA 3'-end formation. The polypeptide is mRNA 3'-end-processing protein RNA14 (RNA14) (Candida glabrata (strain ATCC 2001 / BCRC 20586 / JCM 3761 / NBRC 0622 / NRRL Y-65 / CBS 138) (Yeast)).